Consider the following 312-residue polypeptide: Olfactory receptor 10D3 (312 aa).

At 1-26 the chain is on the extracellular side; it reads MEVKNCCMVTEFILLGIPHTEGLEMT. Residues 27–47 form a helical membrane-spanning segment; the sequence is LFVLFLPFYACTLLGNVSILV. At 48 to 57 the chain is on the cytoplasmic side; that stretch reads AVMSSARLHT. Residues 58–78 traverse the membrane as a helical segment; it reads PMYFFLGNLSVFDMGFSSVTC. Residues 79 to 97 are Extracellular-facing; that stretch reads PKMLLYLMGLSRLISYKDC. Cysteine 97 and cysteine 179 are oxidised to a cystine. The helical transmembrane segment at 98–118 threads the bilayer; sequence VCQLFFFHFLGSIECFLFTVM. Residues 119–139 lie on the Cytoplasmic side of the membrane; that stretch reads AYDRFTAICYPLRYTVIMNPR. Residues 140 to 160 traverse the membrane as a helical segment; it reads ICVALAVGTWLLGCIHSSILT. At 161-197 the chain is on the extracellular side; that stretch reads SLTFTLPYCGPNEVDHFFCDIPALLPLACADTSLAQR. The helical transmembrane segment at 198–218 threads the bilayer; the sequence is VSFTNVGLISLVCFLLILLSY. Topologically, residues 219–239 are cytoplasmic; the sequence is TRITISILSIRTTEGRRRAFS. A helical membrane pass occupies residues 240–260; it reads TCSAHLIAILCAYGPIITVYL. Over 261 to 266 the chain is Extracellular; sequence QPTPNP. The chain crosses the membrane as a helical span at residues 267 to 287; that stretch reads MLGTVVQILMNLVGPMLNPLI. Topologically, residues 288-312 are cytoplasmic; the sequence is YTLRNKEVKTALKTILHRTGHVPES.

This sequence belongs to the G-protein coupled receptor 1 family.

It is found in the cell membrane. Its function is as follows. Odorant receptor. This Homo sapiens (Human) protein is Olfactory receptor 10D3.